We begin with the raw amino-acid sequence, 313 residues long: Nematocyst expressed protein 8 (313 aa).

The N-terminal stretch at 1–19 is a signal peptide; that stretch reads MLRRPLLLVLFTVFSTLYA. Positions 24-56 are disordered; sequence GVSPPTNESEAEVSPGDDEGPPEPGNEPDVNWR. Residues 32 to 44 show a composition bias toward acidic residues; that stretch reads SEAEVSPGDDEGP. 3 ShKT domains span residues 65–99, 109–145, and 151–186; these read CKDK…CRFC, CKDL…CELC, and FKYT…CRKY. Intrachain disulfides connect Cys-65–Cys-99, Cys-72–Cys-92, Cys-81–Cys-96, Cys-109–Cys-145, Cys-127–Cys-142, Cys-160–Cys-179, and Cys-169–Cys-183. Low complexity predominate over residues 222 to 244; the sequence is TAAPSTQPAETTKAPPNTAAPTA. A disordered region spans residues 222–313; it reads TAAPSTQPAE…LCDEKHSSQQ (92 aa). The span at 245-265 shows a compositional bias: pro residues; sequence APTPAPTPAPAPAPTPAPVAP. Residues 280–297 show a composition bias toward acidic residues; it reads TPEEQDDNSADESTEIEA.

Belongs to the NEP3 family. In terms of tissue distribution, nematocytes. In late planulae, is only expressed in a handful of nematocytes in the lower pharynx. Is absent from the tentacles and outer body wall.

The protein resides in the nematocyst. It localises to the secreted. Functionally, probable toxin probably only used for predation. The sequence is that of Nematocyst expressed protein 8 from Nematostella vectensis (Starlet sea anemone).